The chain runs to 48 residues: ATP synthase protein 8 (48 aa).

A helical transmembrane segment spans residues 13–32 (VVFTLISLSFIFFVFSKYIL).

The protein belongs to the ATPase protein 8 family. In terms of assembly, F-type ATPases have 2 components, CF(1) - the catalytic core - and CF(0) - the membrane proton channel.

Its subcellular location is the mitochondrion membrane. Functionally, mitochondrial membrane ATP synthase (F(1)F(0) ATP synthase or Complex V) produces ATP from ADP in the presence of a proton gradient across the membrane which is generated by electron transport complexes of the respiratory chain. F-type ATPases consist of two structural domains, F(1) - containing the extramembraneous catalytic core and F(0) - containing the membrane proton channel, linked together by a central stalk and a peripheral stalk. During catalysis, ATP synthesis in the catalytic domain of F(1) is coupled via a rotary mechanism of the central stalk subunits to proton translocation. Part of the complex F(0) domain. Minor subunit located with subunit a in the membrane. The polypeptide is ATP synthase protein 8 (ATP8) (Trichophyton rubrum (Athlete's foot fungus)).